Here is a 174-residue protein sequence, read N- to C-terminus: Repair DNA polymerase X (174 aa).

The interval 42 to 51 (REEKMLNDVD) is involved in ssDNA binding. Mg(2+)-binding residues include D49 and D51. C81 and C86 are oxidised to a cystine. Residue D100 participates in Mg(2+) binding.

It belongs to the DNA polymerase type-X family. Requires Mg(2+) as cofactor.

It localises to the virion. The enzyme catalyses DNA(n) + a 2'-deoxyribonucleoside 5'-triphosphate = DNA(n+1) + diphosphate. Functionally, error-prone polymerase lacking a proofreading 3'-5' exonuclease which catalyzes the gap-filling reaction during the DNA repair process. Specifically binds intermediates in the single-nucleotide base-excision repair process. Also catalyzes DNA polymerization with low nucleotide-insertion fidelity. Probably acts as a strategic DNA mutase, which gives rise to a rapid emergence of variants. Generates mismatched G-G pairs, in that case, the polymerase first binds the deoxynucleotide followed by mismatch formation. Together with the viral DNA ligase, fills the single nucleotide gaps generated by the AP endonuclease. Binds DNA with high affinity via the helix alphaE. This chain is Repair DNA polymerase X, found in African swine fever virus (isolate Tick/Malawi/Lil 20-1/1983) (ASFV).